A 743-amino-acid polypeptide reads, in one-letter code: 1,4-alpha-glucan branching enzyme GlgB (743 aa).

Residue aspartate 423 is the Nucleophile of the active site. Residue glutamate 476 is the Proton donor of the active site.

The protein belongs to the glycosyl hydrolase 13 family. GlgB subfamily. In terms of assembly, monomer.

It catalyses the reaction Transfers a segment of a (1-&gt;4)-alpha-D-glucan chain to a primary hydroxy group in a similar glucan chain.. Its pathway is glycan biosynthesis; glycogen biosynthesis. Its function is as follows. Catalyzes the formation of the alpha-1,6-glucosidic linkages in glycogen by scission of a 1,4-alpha-linked oligosaccharide from growing alpha-1,4-glucan chains and the subsequent attachment of the oligosaccharide to the alpha-1,6 position. The chain is 1,4-alpha-glucan branching enzyme GlgB from Pseudomonas fluorescens (strain ATCC BAA-477 / NRRL B-23932 / Pf-5).